Consider the following 76-residue polypeptide: UPF0352 protein PC1_1633 (76 aa).

The protein belongs to the UPF0352 family.

In Pectobacterium carotovorum subsp. carotovorum (strain PC1), this protein is UPF0352 protein PC1_1633.